We begin with the raw amino-acid sequence, 182 residues long: Ribosome-recycling factor (182 aa).

This sequence belongs to the RRF family.

Its subcellular location is the cytoplasm. In terms of biological role, responsible for the release of ribosomes from messenger RNA at the termination of protein biosynthesis. May increase the efficiency of translation by recycling ribosomes from one round of translation to another. The sequence is that of Ribosome-recycling factor from Prochlorococcus marinus (strain MIT 9312).